The chain runs to 192 residues: Crossover junction endodeoxyribonuclease RuvC (192 aa).

Active-site residues include Asp-9, Glu-70, and Asp-143. Positions 9, 70, and 143 each coordinate Mg(2+). The tract at residues 161–192 is disordered; that stretch reads GASVATTGPGSSSLTPAQRAWAEAEAKARRAR. Positions 163–176 are enriched in polar residues; it reads SVATTGPGSSSLTP. Positions 182-192 are enriched in basic and acidic residues; that stretch reads AEAEAKARRAR.

Belongs to the RuvC family. As to quaternary structure, homodimer which binds Holliday junction (HJ) DNA. The HJ becomes 2-fold symmetrical on binding to RuvC with unstacked arms; it has a different conformation from HJ DNA in complex with RuvA. In the full resolvosome a probable DNA-RuvA(4)-RuvB(12)-RuvC(2) complex forms which resolves the HJ. It depends on Mg(2+) as a cofactor.

It localises to the cytoplasm. It catalyses the reaction Endonucleolytic cleavage at a junction such as a reciprocal single-stranded crossover between two homologous DNA duplexes (Holliday junction).. Functionally, the RuvA-RuvB-RuvC complex processes Holliday junction (HJ) DNA during genetic recombination and DNA repair. Endonuclease that resolves HJ intermediates. Cleaves cruciform DNA by making single-stranded nicks across the HJ at symmetrical positions within the homologous arms, yielding a 5'-phosphate and a 3'-hydroxyl group; requires a central core of homology in the junction. The consensus cleavage sequence is 5'-(A/T)TT(C/G)-3'. Cleavage occurs on the 3'-side of the TT dinucleotide at the point of strand exchange. HJ branch migration catalyzed by RuvA-RuvB allows RuvC to scan DNA until it finds its consensus sequence, where it cleaves and resolves the cruciform DNA. This chain is Crossover junction endodeoxyribonuclease RuvC, found in Pseudarthrobacter chlorophenolicus (strain ATCC 700700 / DSM 12829 / CIP 107037 / JCM 12360 / KCTC 9906 / NCIMB 13794 / A6) (Arthrobacter chlorophenolicus).